The following is a 509-amino-acid chain: Coiled-coil domain-containing protein 181 (509 aa).

A compositionally biased stretch (basic and acidic residues) spans 58 to 82 (VIEHTKQHSDPDKSLQDEVSPRKND). Disordered regions lie at residues 58-120 (VIEH…EEED), 241-332 (PINN…VTST), and 345-367 (QLEQKREKLKREEERRKIEEEKE). 2 stretches are compositionally biased toward polar residues: residues 243–266 (NNANTTENDPQQLLPRSSNSSVSG) and 300–332 (TCPSSAVISDQSKGNGNSNHRAQSAHISPVTST). Positions 335–375 (LSPRQKELQKQLEQKREKLKREEERRKIEEEKEKKRENDIV) form a coiled coil.

The protein belongs to the CCDC181 family. As to quaternary structure, homodimer. Interacts with HOOK1. Interacts with HOOK2. Interacts with HOOK3.

It localises to the cytoplasm. The protein resides in the cytoskeleton. The protein localises to the cell projection. It is found in the cilium. Its subcellular location is the flagellum. Its function is as follows. Microtubule-binding protein that localizes to the microtubular manchette of elongating spermatids. The polypeptide is Coiled-coil domain-containing protein 181 (Pongo abelii (Sumatran orangutan)).